Reading from the N-terminus, the 105-residue chain is Flexible cuticle protein 12 (105 aa).

Positions 1–16 are cleaved as a signal peptide; sequence MKSFVVVALLVAVAAA. In terms of domain architecture, Chitin-binding type R&amp;R spans 37–105; sequence VEGFQYGYET…KPVGAHIPVA (69 aa).

The polypeptide is Flexible cuticle protein 12 (CP12) (Hyalophora cecropia (Cecropia moth)).